Here is a 343-residue protein sequence, read N- to C-terminus: L-idonate 5-dehydrogenase (NAD(P)(+)) (343 aa).

Residues Cys40, His65, Cys93, Cys96, Cys99, Cys107, and Glu153 each contribute to the Zn(2+) site.

This sequence belongs to the zinc-containing alcohol dehydrogenase family. Requires Zn(2+) as cofactor.

The catalysed reaction is L-idonate + NADP(+) = 5-dehydro-D-gluconate + NADPH + H(+). It catalyses the reaction L-idonate + NAD(+) = 5-dehydro-D-gluconate + NADH + H(+). It functions in the pathway carbohydrate acid metabolism; L-idonate degradation. Functionally, catalyzes the NADH/NADPH-dependent oxidation of L-idonate to 5-ketogluconate (5KG). The sequence is that of L-idonate 5-dehydrogenase (NAD(P)(+)) (idnD) from Escherichia coli (strain K12).